The following is a 136-amino-acid chain: UPF0275 protein PM0493 (136 aa).

Belongs to the UPF0275 family.

The chain is UPF0275 protein PM0493 from Pasteurella multocida (strain Pm70).